A 280-amino-acid chain; its full sequence is Vitamin B12-binding protein (280 aa).

The signal sequence occupies residues 1–27; that stretch reads MMPLGLFPLPRAAVVLLISLLTLPAQA. Residues 30–277 enclose the Fe/B12 periplasmic-binding domain; the sequence is RVISLSPSTT…QMASIPTPVA (248 aa). A cyanocob(III)alamin-binding site is contributed by Tyr-57. Residues Cys-190 and Cys-266 are joined by a disulfide bond.

Belongs to the BtuF family. As to quaternary structure, the complex is composed of two ATP-binding proteins (BtuD), two transmembrane proteins (BtuC) and a solute-binding protein (BtuF).

The protein localises to the periplasm. Part of the ABC transporter complex BtuCDF involved in vitamin B12 import. Binds vitamin B12 and delivers it to the periplasmic surface of BtuC. In Yersinia pseudotuberculosis serotype O:1b (strain IP 31758), this protein is Vitamin B12-binding protein.